A 406-amino-acid polypeptide reads, in one-letter code: Tyrosine--tRNA ligase (406 aa).

The 'HIGH' region signature appears at 51–60; the sequence is PTAPDLHLGH. The 'KMSKS' region motif lies at 236 to 240; that stretch reads KMSKS. K239 contacts ATP. One can recognise an S4 RNA-binding domain in the interval 345–405; sequence IWICKAMVEG…GKRKFLRLIV (61 aa).

The protein belongs to the class-I aminoacyl-tRNA synthetase family. TyrS type 2 subfamily. Homodimer.

The protein resides in the cytoplasm. The enzyme catalyses tRNA(Tyr) + L-tyrosine + ATP = L-tyrosyl-tRNA(Tyr) + AMP + diphosphate + H(+). Its function is as follows. Catalyzes the attachment of tyrosine to tRNA(Tyr) in a two-step reaction: tyrosine is first activated by ATP to form Tyr-AMP and then transferred to the acceptor end of tRNA(Tyr). The sequence is that of Tyrosine--tRNA ligase from Wolinella succinogenes (strain ATCC 29543 / DSM 1740 / CCUG 13145 / JCM 31913 / LMG 7466 / NCTC 11488 / FDC 602W) (Vibrio succinogenes).